The following is a 188-amino-acid chain: Accessory gene regulator protein B (188 aa).

The next 4 helical transmembrane spans lie at 49-69 (LALL…FLTL), 104-126 (ISFQ…YAPA), 143-163 (IKSI…PPPY), and 166-186 (FVVY…SIKE).

This sequence belongs to the AgrB family.

It is found in the cell membrane. Essential for the production of a quorum sensing system signal molecule, the autoinducing peptide (AIP). This quorum sensing system is responsible for the regulation of the expression of virulence factor genes. Involved in the proteolytic processing of AgrD, the precursor of AIP. The protein is Accessory gene regulator protein B of Staphylococcus intermedius.